The sequence spans 157 residues: Putative dehydration-responsive element-binding protein 2H (157 aa).

The short motif at 5 to 21 (RKSRGTRDVAEILRKWR) is the Nuclear localization signal element. The interval 29-57 (ADSCIDGGGSKPIRKAPPKRSRKGCMKGK) is disordered. Basic residues predominate over residues 40–54 (PIRKAPPKRSRKGCM). The segment at residues 66–123 (DYTGVRQRTWGKWVAEIREPGRGAKLWLGTFSSSYEAALAYDEASKAIYGQSARLNLP) is a DNA-binding region (AP2/ERF).

This sequence belongs to the AP2/ERF transcription factor family. ERF subfamily.

It localises to the nucleus. In terms of biological role, putative transcriptional activator that binds specifically to the DNA sequence 5'-[AG]CCGAC-3'. The sequence is that of Putative dehydration-responsive element-binding protein 2H (DREB2H) from Arabidopsis thaliana (Mouse-ear cress).